The chain runs to 106 residues: MSRNFEWASPGSDLLEKERTKVKPPAMYNVVLHNDDYTPMDFVIEILERFFSLDIEKATEVMLKVHYEGKAICGTYSAEIAETKVAQVTMYSKENEHPLLCTMEQV.

The protein belongs to the ClpS family. As to quaternary structure, binds to the N-terminal domain of the chaperone ClpA.

Involved in the modulation of the specificity of the ClpAP-mediated ATP-dependent protein degradation. The polypeptide is ATP-dependent Clp protease adapter protein ClpS (Vibrio atlanticus (strain LGP32) (Vibrio splendidus (strain Mel32))).